The primary structure comprises 684 residues: Glycine--tRNA ligase beta subunit (684 aa).

Belongs to the class-II aminoacyl-tRNA synthetase family. Tetramer of two alpha and two beta subunits.

It localises to the cytoplasm. It carries out the reaction tRNA(Gly) + glycine + ATP = glycyl-tRNA(Gly) + AMP + diphosphate. This is Glycine--tRNA ligase beta subunit from Pseudomonas aeruginosa (strain UCBPP-PA14).